The primary structure comprises 259 residues: Tumor necrosis factor receptor superfamily member 10C (259 aa).

The first 25 residues, 1–25 (MARIPKTLKFVVVIVAVLLPVLAYS), serve as a signal peptide directing secretion. 3 TNFR-Cys repeats span residues 29–66 (ARQE…TGAC), 69–109 (CTEG…DTVC), and 110–149 (QCKE…DIQC). Residues 30-45 (RQEEVPQQTVAPQQQR) show a composition bias toward polar residues. The tract at residues 30–56 (RQEEVPQQTVAPQQQRHSFKGEECPAG) is disordered. Intrachain disulfides connect C53–C66, C69–C85, C88–C101, C91–C109, C111–C125, C128–C141, and C131–C149. N77 is a glycosylation site (N-linked (GlcNAc...) (high mannose) asparagine). Residues N140 and N156 are each glycosylated (N-linked (GlcNAc...) (high mannose) asparagine). The segment at 160–224 (ETPAAEETMN…TSPGTPAPAA (65 aa)) is disordered. 5 TAPE repeats span residues 162-176 (PAAE…GTPA), 177-191 (PAAE…GTPA), 192-206 (PAAE…GTPA), 207-221 (PAAE…GTPA), and 222-236 (PAAE…GTPA). Residues 185–217 (TSPGTPAPAAEETMTTSPGTPAPAAEETMTTSP) are compositionally biased toward low complexity. A lipid anchor (GPI-anchor amidated alanine) is attached at A236. Residues 237 to 259 (SSHYLSCTIVGIIVLIVLLIVFV) constitute a propeptide, removed in mature form.

In terms of processing, N-glycosylated and O-glycosylated. In terms of tissue distribution, higher expression in normal tissues than in tumor cell lines. Highly expressed in peripheral blood lymphocytes, spleen, skeletal muscle, placenta, lung and heart.

It is found in the cell membrane. Functionally, receptor for the cytotoxic ligand TRAIL. Lacks a cytoplasmic death domain and hence is not capable of inducing apoptosis. May protect cells against TRAIL mediated apoptosis by competing with TRAIL-R1 and R2 for binding to the ligand. This is Tumor necrosis factor receptor superfamily member 10C (TNFRSF10C) from Homo sapiens (Human).